Reading from the N-terminus, the 97-residue chain is Co-chaperonin GroES (97 aa).

Belongs to the GroES chaperonin family. As to quaternary structure, heptamer of 7 subunits arranged in a ring. Interacts with the chaperonin GroEL.

It localises to the cytoplasm. Functionally, together with the chaperonin GroEL, plays an essential role in assisting protein folding. The GroEL-GroES system forms a nano-cage that allows encapsulation of the non-native substrate proteins and provides a physical environment optimized to promote and accelerate protein folding. GroES binds to the apical surface of the GroEL ring, thereby capping the opening of the GroEL channel. This chain is Co-chaperonin GroES, found in Pseudomonas putida (strain GB-1).